A 398-amino-acid polypeptide reads, in one-letter code: Lymphocyte transmembrane adapter 1 (398 aa).

Topologically, residues 1 to 37 (MDGVTPTLSTIRGRTLESSTLHVTPRSLDRNKDQITN) are extracellular. Residues 38-58 (IFSGFAGLLAILLVVAVFCIL) form a helical; Signal-anchor for type III membrane protein membrane-spanning segment. The Cytoplasmic segment spans residues 59 to 398 (WNWNKRKKRQ…GPGTQLLPDE (340 aa)). The residue at position 193 (Y193) is a Phosphotyrosine. The segment at 228–261 (TEERDEGCGDAGDCTSLYSPGAEDSDSLSNGEGS) is disordered. Residues Y268 and Y294 each carry the phosphotyrosine modification. Residues 298-330 (PAADPSGSQQQAEKDVPSSNIGHVEDKTDDPGT) form a disordered region. Positions 303 to 318 (SGSQQQAEKDVPSSNI) are enriched in polar residues. Residues 320–329 (HVEDKTDDPG) are compositionally biased toward basic and acidic residues. Phosphotyrosine is present on residues Y345 and Y373. Residues 347-398 (DFQPFTQSEDSQMKHREEMSNEDSSDYENVLTAKLGGRDSEQGPGTQLLPDE) are disordered.

When phosphorylated, interacts with GRB2, PIK3R1 and GRAP2. Post-translationally, phosphorylated on tyrosines by Syk, Lck or ZAP70 upon TCR or BCR activation; which leads to the recruitment of GRB2, PIK3R1 and GRAP2. In terms of tissue distribution, expressed in spleen, thymus, and peripheral blood leukocytes. Expressed in several B-, T-, NK and monocyte cell lines.

The protein resides in the cell membrane. Its function is as follows. Negatively regulates TCR (T-cell antigen receptor)-mediated signaling in T-cells and BCR (B-cell antigen receptor)-mediated signaling in B-cells. This chain is Lymphocyte transmembrane adapter 1 (LAX1), found in Homo sapiens (Human).